The chain runs to 702 residues: Elongation factor G (702 aa).

The 283-residue stretch at 8–290 (ERYRNIGISA…GVVEYLPSPV (283 aa)) folds into the tr-type G domain. GTP is bound by residues 17-24 (AHIDAGKT), 88-92 (DTPGH), and 142-145 (NKMD).

This sequence belongs to the TRAFAC class translation factor GTPase superfamily. Classic translation factor GTPase family. EF-G/EF-2 subfamily.

It is found in the cytoplasm. Catalyzes the GTP-dependent ribosomal translocation step during translation elongation. During this step, the ribosome changes from the pre-translocational (PRE) to the post-translocational (POST) state as the newly formed A-site-bound peptidyl-tRNA and P-site-bound deacylated tRNA move to the P and E sites, respectively. Catalyzes the coordinated movement of the two tRNA molecules, the mRNA and conformational changes in the ribosome. The chain is Elongation factor G from Janthinobacterium sp. (strain Marseille) (Minibacterium massiliensis).